Reading from the N-terminus, the 129-residue chain is Glycine cleavage system H protein (129 aa).

The Lipoyl-binding domain occupies 24 to 106 (LLKIGVSEFA…IGEGWLVILK (83 aa)). Lysine 65 is subject to N6-lipoyllysine.

The protein belongs to the GcvH family. The glycine cleavage system is composed of four proteins: P, T, L and H. Requires (R)-lipoate as cofactor.

Its function is as follows. The glycine cleavage system catalyzes the degradation of glycine. The H protein shuttles the methylamine group of glycine from the P protein to the T protein. The sequence is that of Glycine cleavage system H protein from Prochlorococcus marinus (strain MIT 9215).